Here is a 435-residue protein sequence, read N- to C-terminus: F-box/FBD/LRR-repeat protein At1g51370 (435 aa).

The F-box domain occupies 18 to 64; that stretch reads EDRISQLPEPLISEILFHLSTKDSVRTSALSTKWRYLWQSVPGLDLD. 5 LRR repeats span residues 123–148, 170–195, 234–259, 262–287, and 314–340; these read VHCF…RLRW, VSYP…ILFS, AKMY…DFVN, GRYQ…VISS, and RFYI…ILEM. The region spanning 354-406 is the FBD domain; it reads EPNVMVSTVPWCLVSSLKFVELKRSIPRYEGEMELVRYVLTNSTVLKKLRLNV.

In Arabidopsis thaliana (Mouse-ear cress), this protein is F-box/FBD/LRR-repeat protein At1g51370.